Reading from the N-terminus, the 618-residue chain is Vacuolar-sorting receptor 5 (618 aa).

Positions Met-1–Gly-23 are cleaved as a signal peptide. At Phe-24–Arg-563 the chain is on the lumenal side. The region spanning Lys-58–Leu-164 is the PA domain. N-linked (GlcNAc...) asparagine glycosylation is found at Asn-81, Asn-293, and Asn-430. 2 EGF-like domains span residues Glu-412–Lys-462 and Gly-465–Glu-511. 7 disulfides stabilise this stretch: Cys-416–Cys-434, Cys-423–Cys-443, Cys-445–Cys-461, Cys-469–Cys-489, Cys-476–Cys-497, Cys-499–Cys-510, and Cys-540–Cys-553. The EGF-like 3; calcium-binding domain occupies Asp-512 to Ile-554. Asn-542 carries an N-linked (GlcNAc...) asparagine glycan. Residues Gly-564 to Phe-584 form a helical membrane-spanning segment. At Tyr-585–Lys-618 the chain is on the cytoplasmic side. Positions Tyr-604–Leu-607 match the Tyrosine-based internalization motif motif.

It belongs to the VSR (BP-80) family. Expressed in seedlings, roots, leaves, flowers and siliques.

Its subcellular location is the membrane. It localises to the golgi apparatus membrane. The protein resides in the cytoplasmic vesicle. It is found in the clathrin-coated vesicle membrane. The protein localises to the prevacuolar compartment membrane. Functionally, vacuolar-sorting receptor (VSR) involved in clathrin-coated vesicles sorting from Golgi apparatus to vacuoles. The polypeptide is Vacuolar-sorting receptor 5 (VSR5) (Arabidopsis thaliana (Mouse-ear cress)).